The sequence spans 360 residues: Carbamoyl phosphate synthase small chain (360 aa).

Positions 1–169 (MTKRLLILED…TKTAYPAPGI (169 aa)) are CPSase. Residues serine 46, glycine 220, and glycine 222 each contribute to the L-glutamine site. One can recognise a Glutamine amidotransferase type-1 domain in the interval 172 to 358 (NIVLVDFGLK…LEMIDSWRCT (187 aa)). Cysteine 247 acts as the Nucleophile in catalysis. Residues methionine 248, glutamine 251, asparagine 289, glycine 291, and tyrosine 292 each contribute to the L-glutamine site. Residues histidine 331 and aspartate 333 contribute to the active site.

Belongs to the CarA family. Composed of two chains; the small (or glutamine) chain promotes the hydrolysis of glutamine to ammonia, which is used by the large (or ammonia) chain to synthesize carbamoyl phosphate. Tetramer of heterodimers (alpha,beta)4.

It catalyses the reaction hydrogencarbonate + L-glutamine + 2 ATP + H2O = carbamoyl phosphate + L-glutamate + 2 ADP + phosphate + 2 H(+). It carries out the reaction L-glutamine + H2O = L-glutamate + NH4(+). The protein operates within amino-acid biosynthesis; L-arginine biosynthesis; carbamoyl phosphate from bicarbonate: step 1/1. It functions in the pathway pyrimidine metabolism; UMP biosynthesis via de novo pathway; (S)-dihydroorotate from bicarbonate: step 1/3. Its function is as follows. Small subunit of the glutamine-dependent carbamoyl phosphate synthetase (CPSase). CPSase catalyzes the formation of carbamoyl phosphate from the ammonia moiety of glutamine, carbonate, and phosphate donated by ATP, constituting the first step of 2 biosynthetic pathways, one leading to arginine and/or urea and the other to pyrimidine nucleotides. The small subunit (glutamine amidotransferase) binds and cleaves glutamine to supply the large subunit with the substrate ammonia. The polypeptide is Carbamoyl phosphate synthase small chain (Streptococcus pyogenes serotype M3 (strain SSI-1)).